A 229-amino-acid chain; its full sequence is Probable ribonuclease H (229 aa).

Positions 42-164 (LQDISLEFDK…ADFLANSAAK (123 aa)) constitute an RNase H type-1 domain. Positions 60, 87, and 156 each coordinate a divalent metal cation.

It belongs to the RNase H family. The cofactor is a divalent metal cation.

The enzyme catalyses Endonucleolytic cleavage to 5'-phosphomonoester.. Its function is as follows. Endonuclease that specifically degrades the RNA of RNA-DNA hybrids. This is Probable ribonuclease H (RNH1) from Acanthamoeba polyphaga mimivirus (APMV).